The chain runs to 410 residues: Arginine deiminase (410 aa).

C399 acts as the Amidino-cysteine intermediate in catalysis.

It belongs to the arginine deiminase family.

It is found in the cytoplasm. It catalyses the reaction L-arginine + H2O = L-citrulline + NH4(+). Its pathway is amino-acid degradation; L-arginine degradation via ADI pathway; carbamoyl phosphate from L-arginine: step 1/2. The sequence is that of Arginine deiminase from Treponema denticola (strain ATCC 35405 / DSM 14222 / CIP 103919 / JCM 8153 / KCTC 15104).